We begin with the raw amino-acid sequence, 211 residues long: Protein CHLORORESPIRATORY REDUCTION 41, chloroplastic (211 aa).

Residues 1-38 (MASTSTLLLPSLSSKNLHIAVPIRTNSFVRRTTKFSTK) constitute a chloroplast transit peptide. Residues 136–163 (AKAGEIVAERAREEAEVLRDEGKVEERM) adopt a coiled-coil conformation.

As to quaternary structure, biogenesis factor component of the plastidial NDH subcomplex A.

Its subcellular location is the plastid. It localises to the chloroplast. The protein resides in the chloroplast stroma. Functionally, required for both formation and activity of the chloroplast NAD(P)H dehydrogenase (NDH) complex of the photosynthetic electron transport chain. Functions in assembly or stabilization of the NDH complex; probably involved, together with NdhO and NdhH, in the formation of an NDH subcomplex A assembly intermediate (NAI500). In Arabidopsis thaliana (Mouse-ear cress), this protein is Protein CHLORORESPIRATORY REDUCTION 41, chloroplastic.